Here is a 396-residue protein sequence, read N- to C-terminus: Putative ribosomal RNA large subunit methyltransferase YwbD (396 aa).

Residues Met1–Phe79 enclose the PUA domain.

It belongs to the methyltransferase superfamily. RlmI family.

The protein resides in the cytoplasm. This Bacillus subtilis (strain 168) protein is Putative ribosomal RNA large subunit methyltransferase YwbD (ywbD).